A 226-amino-acid polypeptide reads, in one-letter code: uncharacterized protein (226 aa).

In terms of domain architecture, ABC transporter spans 4–226 (LQFQQVGYWY…FTVKENVAVV (223 aa)). 38–45 (GTSGTGKT) contributes to the ATP binding site.

The protein belongs to the ABC transporter superfamily.

This is an uncharacterized protein from Bacillus subtilis (strain 168).